Consider the following 89-residue polypeptide: Small ribosomal subunit protein uS15 (89 aa).

The protein belongs to the universal ribosomal protein uS15 family. As to quaternary structure, part of the 30S ribosomal subunit. Forms a bridge to the 50S subunit in the 70S ribosome, contacting the 23S rRNA.

One of the primary rRNA binding proteins, it binds directly to 16S rRNA where it helps nucleate assembly of the platform of the 30S subunit by binding and bridging several RNA helices of the 16S rRNA. Functionally, forms an intersubunit bridge (bridge B4) with the 23S rRNA of the 50S subunit in the ribosome. The chain is Small ribosomal subunit protein uS15 from Caulobacter sp. (strain K31).